Consider the following 184-residue polypeptide: Glutathione-regulated potassium-efflux system ancillary protein KefG (184 aa).

Belongs to the NAD(P)H dehydrogenase (quinone) family. KefG subfamily. In terms of assembly, interacts with KefB.

It localises to the cell inner membrane. It carries out the reaction a quinone + NADH + H(+) = a quinol + NAD(+). The enzyme catalyses a quinone + NADPH + H(+) = a quinol + NADP(+). Regulatory subunit of a potassium efflux system that confers protection against electrophiles. Required for full activity of KefB. This chain is Glutathione-regulated potassium-efflux system ancillary protein KefG, found in Shigella dysenteriae serotype 1 (strain Sd197).